The following is a 185-amino-acid chain: MDIDPYKEFGATVELLSFLPSDFFPSVRDLLDTASALYREALESPEHCSPHHTALRQAILCWGELMTLATWVGNNLEDPASRDLVVNYVNTNVGLKIRQLLWFHISCLTFGRETVLEYLVSFGVWIRTPPAYRPPNAPILSTLPETTVVRRRDRGRSPRRRTPSPRRRRSPSPRRRRSQSRESQC.

A disordered region spans residues 136 to 185 (NAPILSTLPETTVVRRRDRGRSPRRRTPSPRRRRSPSPRRRRSQSRESQC). Residues 149-178 (VRRRDRGRSPRRRTPSPRRRRSPSPRRRRS) are compositionally biased toward basic residues. Residues S157, S164, and S172 each carry the phosphoserine; by host modification. A 1; half-length repeat occupies 157–163 (SPRRRTP). Residues 157 to 179 (SPRRRTPSPRRRRSPSPRRRRSQ) are 3 X 8 AA repeats of S-P-R-R-R-[PR]-S-Q. A Bipartite nuclear localization signal motif is present at residues 160-177 (RRTPSPRRRRSPSPRRRR). Repeat copies occupy residues 164-171 (SPRRRRSP) and 172-179 (SPRRRRSQ). The tract at residues 179 to 185 (QSRESQC) is RNA binding.

This sequence belongs to the orthohepadnavirus core antigen family. Homodimerizes, then multimerizes. Interacts with cytosol exposed regions of viral L glycoprotein present in the reticulum-to-Golgi compartment. Interacts with human FLNB. Phosphorylated form interacts with host importin alpha; this interaction depends on the exposure of the NLS, which itself depends upon genome maturation and/or phosphorylation of the capsid protein. Interacts with host NUP153. In terms of processing, phosphorylated by host SRPK1, SRPK2, and maybe protein kinase C or GAPDH. Phosphorylation is critical for pregenomic RNA packaging. Protein kinase C phosphorylation is stimulated by HBx protein and may play a role in transport of the viral genome to the nucleus at the late step during the viral replication cycle.

It is found in the virion. It localises to the host cytoplasm. Its function is as follows. Self assembles to form an icosahedral capsid. Most capsids appear to be large particles with an icosahedral symmetry of T=4 and consist of 240 copies of capsid protein, though a fraction forms smaller T=3 particles consisting of 180 capsid proteins. Entering capsids are transported along microtubules to the nucleus. Phosphorylation of the capsid is thought to induce exposure of nuclear localization signal in the C-terminal portion of the capsid protein that allows binding to the nuclear pore complex via the importin (karyopherin-) alpha and beta. Capsids are imported in intact form through the nuclear pore into the nuclear basket, where it probably binds NUP153. Only capsids that contain the mature viral genome can release the viral DNA and capsid protein into the nucleoplasm. Immature capsids get stuck in the basket. Capsids encapsulate the pre-genomic RNA and the P protein. Pre-genomic RNA is reverse-transcribed into DNA while the capsid is still in the cytoplasm. The capsid can then either be directed to the nucleus, providing more genomes for transcription, or bud through the endoplasmic reticulum to provide new virions. The sequence is that of Capsid protein from Hepatitis B virus genotype A2 subtype adw2 (strain Rutter 1979) (HBV-A).